The sequence spans 107 residues: UPF0145 protein PM1668 (107 aa).

The protein belongs to the UPF0145 family.

This Pasteurella multocida (strain Pm70) protein is UPF0145 protein PM1668.